Consider the following 311-residue polypeptide: Methionyl-tRNA formyltransferase (311 aa).

109 to 112 (SLLP) serves as a coordination point for (6S)-5,6,7,8-tetrahydrofolate.

The protein belongs to the Fmt family.

The catalysed reaction is L-methionyl-tRNA(fMet) + (6R)-10-formyltetrahydrofolate = N-formyl-L-methionyl-tRNA(fMet) + (6S)-5,6,7,8-tetrahydrofolate + H(+). Functionally, attaches a formyl group to the free amino group of methionyl-tRNA(fMet). The formyl group appears to play a dual role in the initiator identity of N-formylmethionyl-tRNA by promoting its recognition by IF2 and preventing the misappropriation of this tRNA by the elongation apparatus. This chain is Methionyl-tRNA formyltransferase, found in Staphylococcus aureus (strain MW2).